A 285-amino-acid chain; its full sequence is NAD kinase (285 aa).

Asp-68 (proton acceptor) is an active-site residue. Residues 68-69 (DG), 142-143 (ND), Arg-153, Arg-170, Asp-172, and Gln-242 contribute to the NAD(+) site.

It belongs to the NAD kinase family. The cofactor is a divalent metal cation.

It is found in the cytoplasm. The enzyme catalyses NAD(+) + ATP = ADP + NADP(+) + H(+). In terms of biological role, involved in the regulation of the intracellular balance of NAD and NADP, and is a key enzyme in the biosynthesis of NADP. Catalyzes specifically the phosphorylation on 2'-hydroxyl of the adenosine moiety of NAD to yield NADP. The chain is NAD kinase from Acidobacterium capsulatum (strain ATCC 51196 / DSM 11244 / BCRC 80197 / JCM 7670 / NBRC 15755 / NCIMB 13165 / 161).